The primary structure comprises 384 residues: Putative dioxygenase SSO1533 (384 aa).

Fe cation-binding residues include histidine 296, glutamate 302, and histidine 332.

Belongs to the homogentisate dioxygenase family. The cofactor is Fe cation.

In Saccharolobus solfataricus (strain ATCC 35092 / DSM 1617 / JCM 11322 / P2) (Sulfolobus solfataricus), this protein is Putative dioxygenase SSO1533.